Here is a 155-residue protein sequence, read N- to C-terminus: Small ribosomal subunit protein uS7 (155 aa).

The protein belongs to the universal ribosomal protein uS7 family. As to quaternary structure, part of the 30S ribosomal subunit. Contacts proteins S9 and S11.

One of the primary rRNA binding proteins, it binds directly to 16S rRNA where it nucleates assembly of the head domain of the 30S subunit. Is located at the subunit interface close to the decoding center, probably blocks exit of the E-site tRNA. The chain is Small ribosomal subunit protein uS7 from Mesoplasma florum (strain ATCC 33453 / NBRC 100688 / NCTC 11704 / L1) (Acholeplasma florum).